Reading from the N-terminus, the 1603-residue chain is Pentafunctional AROM polypeptide (1603 aa).

A 3-dehydroquinate synthase region spans residues 1–384 (MGVPTKISIL…YEPRASTVSN (384 aa)). Residues 44–46 (DTN), 81–84 (ESSK), 114–116 (GGV), and D119 contribute to the NAD(+) site. 7-phospho-2-dehydro-3-deoxy-D-arabino-heptonate is bound at residue R130. NAD(+) is bound at residue 139-140 (TT). Residues D146 and K152 each coordinate 7-phospho-2-dehydro-3-deoxy-D-arabino-heptonate. K161 contributes to the NAD(+) binding site. N162 contacts 7-phospho-2-dehydro-3-deoxy-D-arabino-heptonate. NAD(+) contacts are provided by residues 179-182 (FLNT) and N190. E194 serves as a coordination point for Zn(2+). 7-phospho-2-dehydro-3-deoxy-D-arabino-heptonate contacts are provided by residues 194 to 197 (EVIK) and K250. E260 functions as the Proton acceptor; for 3-dehydroquinate synthase activity in the catalytic mechanism. Residues 264-268 (RNLLN) and H271 contribute to the 7-phospho-2-dehydro-3-deoxy-D-arabino-heptonate site. H271 is a binding site for Zn(2+). H275 functions as the Proton acceptor; for 3-dehydroquinate synthase activity in the catalytic mechanism. The 7-phospho-2-dehydro-3-deoxy-D-arabino-heptonate site is built by H287 and K356. H287 lines the Zn(2+) pocket. The segment at 397 to 842 (VYPGFPKSLN…WNTLAQTFKV (446 aa)) is EPSP synthase. Catalysis depends on C824, which acts as the For EPSP synthase activity. A shikimate kinase region spans residues 872 to 1064 (AASIFIIGMR…RRKENTFFVS (193 aa)). 879 to 886 (GMRGAGKT) contacts ATP. Residues 1065-1285 (LTFPDLTPAS…AAPGQLSARE (221 aa)) are 3-dehydroquinase. H1188 serves as the catalytic Proton acceptor; for 3-dehydroquinate dehydratase activity. The active-site Schiff-base intermediate with substrate; for 3-dehydroquinate dehydratase activity is the K1216. The tract at residues 1298–1603 (AKKFAVIGKP…GVSSSDDTIS (306 aa)) is shikimate dehydrogenase.

The protein in the N-terminal section; belongs to the sugar phosphate cyclases superfamily. Dehydroquinate synthase family. In the 2nd section; belongs to the EPSP synthase family. It in the 3rd section; belongs to the shikimate kinase family. This sequence in the 4th section; belongs to the type-I 3-dehydroquinase family. The protein in the C-terminal section; belongs to the shikimate dehydrogenase family. Homodimer. Zn(2+) is required as a cofactor.

The protein resides in the cytoplasm. It catalyses the reaction 7-phospho-2-dehydro-3-deoxy-D-arabino-heptonate = 3-dehydroquinate + phosphate. It carries out the reaction 3-dehydroquinate = 3-dehydroshikimate + H2O. The catalysed reaction is shikimate + NADP(+) = 3-dehydroshikimate + NADPH + H(+). The enzyme catalyses shikimate + ATP = 3-phosphoshikimate + ADP + H(+). It catalyses the reaction 3-phosphoshikimate + phosphoenolpyruvate = 5-O-(1-carboxyvinyl)-3-phosphoshikimate + phosphate. It participates in metabolic intermediate biosynthesis; chorismate biosynthesis; chorismate from D-erythrose 4-phosphate and phosphoenolpyruvate: step 2/7. Its pathway is metabolic intermediate biosynthesis; chorismate biosynthesis; chorismate from D-erythrose 4-phosphate and phosphoenolpyruvate: step 3/7. It functions in the pathway metabolic intermediate biosynthesis; chorismate biosynthesis; chorismate from D-erythrose 4-phosphate and phosphoenolpyruvate: step 4/7. The protein operates within metabolic intermediate biosynthesis; chorismate biosynthesis; chorismate from D-erythrose 4-phosphate and phosphoenolpyruvate: step 5/7. It participates in metabolic intermediate biosynthesis; chorismate biosynthesis; chorismate from D-erythrose 4-phosphate and phosphoenolpyruvate: step 6/7. The AROM polypeptide catalyzes 5 consecutive enzymatic reactions in prechorismate polyaromatic amino acid biosynthesis. The sequence is that of Pentafunctional AROM polypeptide from Paracoccidioides brasiliensis (strain Pb03).